Reading from the N-terminus, the 134-residue chain is Replication enhancer protein (134 aa).

Belongs to the geminiviridae replication enhancer protein family. As to quaternary structure, homooligomer. Interacts with the replication-associated protein (REP). Interacts with host proliferating cell nuclear antigen (PCNA). Interacts with host retinoblastoma-related protein 1 (RBR1), and may thereby deregulate the host cell cycle. Oligomerization and interaction with PCNA are necessary for optimal replication enhancement.

In terms of biological role, increases viral DNA accumulation. Enhances infectivity and symptom expression. The chain is Replication enhancer protein from Nicotiana tabacum (Common tobacco).